Reading from the N-terminus, the 212-residue chain is Peroxisomal membrane protein 4 (212 aa).

Transmembrane regions (helical) follow at residues 97–117 and 153–173; these read GKTYQAHSFVSAFIGGLLVFG and LDPFPWFSGLVWGLVLWLFEY. Asn206 carries N-linked (GlcNAc...) asparagine glycosylation.

This sequence belongs to the peroxisomal membrane protein PXMP2/4 family. As to quaternary structure, interacts with PEX19.

The protein resides in the peroxisome membrane. The chain is Peroxisomal membrane protein 4 (PXMP4) from Bos taurus (Bovine).